The primary structure comprises 343 residues: S-adenosylmethionine:tRNA ribosyltransferase-isomerase (343 aa).

It belongs to the QueA family. As to quaternary structure, monomer.

The protein localises to the cytoplasm. The catalysed reaction is 7-aminomethyl-7-carbaguanosine(34) in tRNA + S-adenosyl-L-methionine = epoxyqueuosine(34) in tRNA + adenine + L-methionine + 2 H(+). It participates in tRNA modification; tRNA-queuosine biosynthesis. In terms of biological role, transfers and isomerizes the ribose moiety from AdoMet to the 7-aminomethyl group of 7-deazaguanine (preQ1-tRNA) to give epoxyqueuosine (oQ-tRNA). The polypeptide is S-adenosylmethionine:tRNA ribosyltransferase-isomerase (Coxiella burnetii (strain CbuG_Q212) (Coxiella burnetii (strain Q212))).